Here is a 244-residue protein sequence, read N- to C-terminus: Phosphoribosyl isomerase A (244 aa).

Asp10 acts as the Proton acceptor in catalysis. Asp129 functions as the Proton donor in the catalytic mechanism.

This sequence belongs to the HisA/HisF family.

It localises to the cytoplasm. The enzyme catalyses 1-(5-phospho-beta-D-ribosyl)-5-[(5-phospho-beta-D-ribosylamino)methylideneamino]imidazole-4-carboxamide = 5-[(5-phospho-1-deoxy-D-ribulos-1-ylimino)methylamino]-1-(5-phospho-beta-D-ribosyl)imidazole-4-carboxamide. It catalyses the reaction N-(5-phospho-beta-D-ribosyl)anthranilate = 1-(2-carboxyphenylamino)-1-deoxy-D-ribulose 5-phosphate. Its pathway is amino-acid biosynthesis; L-histidine biosynthesis; L-histidine from 5-phospho-alpha-D-ribose 1-diphosphate: step 4/9. The protein operates within amino-acid biosynthesis; L-tryptophan biosynthesis; L-tryptophan from chorismate: step 3/5. Involved in both the histidine and tryptophan biosynthetic pathways. The sequence is that of Phosphoribosyl isomerase A (priA) from Mycobacterium leprae (strain TN).